The sequence spans 428 residues: Trigger factor (428 aa).

In terms of domain architecture, PPIase FKBP-type spans G163 to P248.

It belongs to the FKBP-type PPIase family. Tig subfamily.

Its subcellular location is the cytoplasm. It carries out the reaction [protein]-peptidylproline (omega=180) = [protein]-peptidylproline (omega=0). Functionally, involved in protein export. Acts as a chaperone by maintaining the newly synthesized protein in an open conformation. Functions as a peptidyl-prolyl cis-trans isomerase. This chain is Trigger factor, found in Clostridium perfringens (strain ATCC 13124 / DSM 756 / JCM 1290 / NCIMB 6125 / NCTC 8237 / Type A).